The sequence spans 248 residues: D-xylose 1-dehydrogenase (248 aa).

Residues aspartate 42, aspartate 68, asparagine 91, tyrosine 156, lysine 160, valine 189, and threonine 191 each contribute to the NAD(+) site. The Proton acceptor role is filled by tyrosine 156.

The protein belongs to the short-chain dehydrogenases/reductases (SDR) family.

It carries out the reaction D-xylose + NAD(+) = D-xylono-1,5-lactone + NADH + H(+). Involved in the degradation of D-xylose. Catalyzes the initial reaction in the xylose utilization pathway by oxydizing D-xylose into D-xylonolactone. Shows some activity with L-arabinose and D-lyxose, but D-xylose is clearly the best substrate. Has no activity with D-ribose, D-glucose, D-galactose or D-mannose. This is D-xylose 1-dehydrogenase from Caulobacter vibrioides (strain ATCC 19089 / CIP 103742 / CB 15) (Caulobacter crescentus).